Reading from the N-terminus, the 1030-residue chain is Tricorn protease (1030 aa).

Residues 1 to 270 form a six-bladed beta propeller region; it reads MANLLQNPDI…DNVKSLDIGP (270 aa). A binds the substrate's C-terminus region spans residues 93 to 94; that stretch reads RR. Residues 286–635 form a seven-bladed beta propeller region; the sequence is LEDFSMSPGD…EEEKSLNIDA (350 aa). The segment at 641–712 is C-1; it reads NVKEDFAEMY…RTSHSYEMGG (72 aa). The active-site Charge relay system is the His706. The segment at 721 to 816 is PDZ-like; that stretch reads RAGRIACDFK…SGFVDVLQDD (96 aa). Residues 817–1022 are C-2; it reads RYIRYRAWVE…IEMVLADLEK (206 aa). 877–879 serves as a coordination point for substrate; the sequence is GGG. Ser926 (nucleophile) is an active-site residue. Substrate is bound at residue 954-956; it reads GIS. Glu984 (charge relay system) is an active-site residue.

The protein belongs to the peptidase S41B family. In terms of assembly, part of the tricorn proteolytic complex.

The protein resides in the cytoplasm. Tricorn degrades oligopeptides in a sequential manner. This chain is Tricorn protease (tri), found in Thermoplasma volcanium (strain ATCC 51530 / DSM 4299 / JCM 9571 / NBRC 15438 / GSS1).